A 410-amino-acid chain; its full sequence is Sulfate adenylyltransferase (410 aa).

This sequence belongs to the sulfate adenylyltransferase family.

The enzyme catalyses sulfate + ATP + H(+) = adenosine 5'-phosphosulfate + diphosphate. Its pathway is sulfur metabolism; hydrogen sulfide biosynthesis; sulfite from sulfate: step 1/3. The protein is Sulfate adenylyltransferase of Syntrophobacter fumaroxidans (strain DSM 10017 / MPOB).